The sequence spans 448 residues: Phosphoglucosamine mutase (448 aa).

The active-site Phosphoserine intermediate is S100. The Mg(2+) site is built by S100, D240, D242, and D244. S100 carries the post-translational modification Phosphoserine.

Belongs to the phosphohexose mutase family. Mg(2+) serves as cofactor. Post-translationally, activated by phosphorylation.

It carries out the reaction alpha-D-glucosamine 1-phosphate = D-glucosamine 6-phosphate. Functionally, catalyzes the conversion of glucosamine-6-phosphate to glucosamine-1-phosphate. This is Phosphoglucosamine mutase from Bacillus cereus (strain G9842).